The sequence spans 1887 residues: Protein TIC 214 (1887 aa).

Transmembrane regions (helical) follow at residues I18 to G38, F64 to L84, P87 to H107, L124 to L144, V172 to I192, and I221 to I241. 3 disordered regions span residues E248–D300, R785–R805, and L1569–P1603. Acidic residues predominate over residues V256–T268. Residues R1578–N1597 show a composition bias toward basic and acidic residues.

This sequence belongs to the TIC214 family. In terms of assembly, part of the Tic complex.

It is found in the plastid. Its subcellular location is the chloroplast inner membrane. Functionally, involved in protein precursor import into chloroplasts. May be part of an intermediate translocation complex acting as a protein-conducting channel at the inner envelope. The polypeptide is Protein TIC 214 (Solanum tuberosum (Potato)).